We begin with the raw amino-acid sequence, 340 residues long: Manganese-dependent ADP-ribose/CDP-alcohol diphosphatase (340 aa).

Methionine 1 is subject to N-acetylmethionine. Residues aspartate 25, glutamine 27, aspartate 74, asparagine 110, histidine 241, histidine 278, and histidine 280 each contribute to the Zn(2+) site.

Belongs to the ADPRibase-Mn family. Monomer. Mg(2+) serves as cofactor.

It carries out the reaction CDP-choline + H2O = phosphocholine + CMP + 2 H(+). The catalysed reaction is ADP-D-ribose + H2O = D-ribose 5-phosphate + AMP + 2 H(+). The enzyme catalyses CDP-glycerol + H2O = sn-glycerol 3-phosphate + CMP + 2 H(+). Functionally, hydrolyzes ADP-ribose, IDP-ribose, CDP-glycerol, CDP-choline and CDP-ethanolamine, but not other non-reducing ADP-sugars or CDP-glucose. May be involved in immune cell signaling as suggested by the second-messenger role of ADP-ribose, which activates TRPM2 as a mediator of oxidative/nitrosative stress. This chain is Manganese-dependent ADP-ribose/CDP-alcohol diphosphatase (Adprm), found in Mus musculus (Mouse).